Consider the following 436-residue polypeptide: Mannan endo-1,4-beta-mannosidase F (436 aa).

The signal sequence occupies residues 1-18; that stretch reads MRSLSSVALLSAIGAASA. Residues 19–54 enclose the CBM1 domain; that stretch reads QAGPWGQCAGISHTGPTTCESGWSCVYLNDWYSQCQ. A disordered region spans residues 60–88; it reads SSSTTVSSTKQPSSTVAAPSSTTSAHTLP. Residues 79-113 are ser-rich linker; sequence SSTTSAHTLPTGSGSFAKTDGLKFNIDGKTKYFAG. Residues 114–436 form a catalytic region; it reads TNAYWLPFLT…CAVIDHISQI (323 aa). The substrate site is built by Trp146 and Asn260. The active-site Proton donor is Glu261. Tyr336 provides a ligand contact to substrate. The active-site Nucleophile is Glu370. Trp400 is a binding site for substrate.

It belongs to the glycosyl hydrolase 5 (cellulase A) family.

It localises to the secreted. It catalyses the reaction Random hydrolysis of (1-&gt;4)-beta-D-mannosidic linkages in mannans, galactomannans and glucomannans.. Its function is as follows. Endo-1,4-mannanase, a crucial enzyme for depolymerization of seed galactomannans and wood galactoglucomannans. This Aspergillus clavatus (strain ATCC 1007 / CBS 513.65 / DSM 816 / NCTC 3887 / NRRL 1 / QM 1276 / 107) protein is Mannan endo-1,4-beta-mannosidase F (manF).